The chain runs to 200 residues: Recombination protein RecR (200 aa).

The C4-type zinc-finger motif lies at 59–74; that stretch reads CEKCNTFTEAQICEVC. Residues 82 to 177 form the Toprim domain; it reads ALLCVVETPA…AVTRLARGVP (96 aa).

This sequence belongs to the RecR family.

May play a role in DNA repair. It seems to be involved in an RecBC-independent recombinational process of DNA repair. It may act with RecF and RecO. This Burkholderia mallei (strain NCTC 10247) protein is Recombination protein RecR.